Here is a 429-residue protein sequence, read N- to C-terminus: Trigger factor (429 aa).

The 86-residue stretch at 163 to 248 (GDFVVIDFVG…IKEIKVKETP (86 aa)) folds into the PPIase FKBP-type domain.

The protein belongs to the FKBP-type PPIase family. Tig subfamily.

Its subcellular location is the cytoplasm. It carries out the reaction [protein]-peptidylproline (omega=180) = [protein]-peptidylproline (omega=0). Functionally, involved in protein export. Acts as a chaperone by maintaining the newly synthesized protein in an open conformation. Functions as a peptidyl-prolyl cis-trans isomerase. This chain is Trigger factor, found in Halothermothrix orenii (strain H 168 / OCM 544 / DSM 9562).